The chain runs to 255 residues: Ribonuclease HII (255 aa).

The region spanning 72–255 (NYIAGVDEAG…RLSFVKNFVE (184 aa)) is the RNase H type-2 domain. A divalent metal cation is bound by residues D78, E79, and D170.

The protein belongs to the RNase HII family. The cofactor is Mn(2+). Mg(2+) serves as cofactor.

It localises to the cytoplasm. It carries out the reaction Endonucleolytic cleavage to 5'-phosphomonoester.. Endonuclease that specifically degrades the RNA of RNA-DNA hybrids. In Ruminiclostridium cellulolyticum (strain ATCC 35319 / DSM 5812 / JCM 6584 / H10) (Clostridium cellulolyticum), this protein is Ribonuclease HII.